We begin with the raw amino-acid sequence, 105 residues long: Large ribosomal subunit protein eL36 (105 aa).

Lysine 62 bears the N6-acetyllysine mark.

Belongs to the eukaryotic ribosomal protein eL36 family. Component of the large ribosomal subunit.

The protein localises to the cytoplasm. It localises to the cytosol. Its function is as follows. Component of the large ribosomal subunit. The ribosome is a large ribonucleoprotein complex responsible for the synthesis of proteins in the cell. In Bos taurus (Bovine), this protein is Large ribosomal subunit protein eL36 (RPL36).